The sequence spans 101 residues: Urease subunit beta (101 aa).

Belongs to the urease beta subunit family. As to quaternary structure, heterotrimer of UreA (gamma), UreB (beta) and UreC (alpha) subunits. Three heterotrimers associate to form the active enzyme.

Its subcellular location is the cytoplasm. It catalyses the reaction urea + 2 H2O + H(+) = hydrogencarbonate + 2 NH4(+). Its pathway is nitrogen metabolism; urea degradation; CO(2) and NH(3) from urea (urease route): step 1/1. The protein is Urease subunit beta of Cereibacter sphaeroides (strain ATCC 17025 / ATH 2.4.3) (Rhodobacter sphaeroides).